The chain runs to 466 residues: Zinc finger protein ZIC 3 (466 aa).

Residues 65–80 (DLSSGQSSAFTPQGSG) show a composition bias toward polar residues. The segment at 65 to 103 (DLSSGQSSAFTPQGSGYANALGHHHHHHHHHHASQVPTY) is disordered. Positions 86 to 97 (GHHHHHHHHHHA) are enriched in basic residues. K247 participates in a covalent cross-link: Glycyl lysine isopeptide (Lys-Gly) (interchain with G-Cter in SUMO2). The C2H2-type 1; atypical zinc-finger motif lies at 250–285 (LSCKWIEEAQLSRPKKSCDRTFSTMHELVTHVTMEH). The C2H2-type 2; atypical zinc-finger motif lies at 294–321 (HVCYWEECPREGKSFKAKYKLVNHIRVH). Short sequence motifs (nuclear localization signal) lie at residues 296-321 (CYWE…IRVH) and 329-351 (CPFP…KRTH). C2H2-type zinc fingers lie at residues 327–351 (FPCP…KRTH), 357–381 (FKCE…MHVH), and 387–409 (YICK…MKVH). A disordered region spans residues 403 to 466 (RKHMKVHESQ…LPPNFNEWYV (64 aa)). Low complexity predominate over residues 411 to 427 (SQGSDSSPAASSGYESS). Positions 434–454 (SANSKDTTKTPSAVQTSTSHN) are enriched in polar residues.

Belongs to the GLI C2H2-type zinc-finger protein family. As to quaternary structure, interacts with KPNA1 and KPNA6. Interacts (via C2H2-type domains 3, 4 and 5) with GLI3; the interaction enhances its transcriptional activity. Interacts (via the C2H2-type domains 3, 4 and 5) with MDFIC (via the C2H2-type domains 3, 4 and 5); the interaction reduces its transcriptional activity. CNS. A high level expression is seen in the cerebellum.

The protein localises to the nucleus. It localises to the cytoplasm. Its function is as follows. Acts as a transcriptional activator. Required in the earliest stages in both axial midline development and left-right (LR) asymmetry specification. Binds to the minimal GLI-consensus sequence 5'-GGGTGGTC-3'. This Mus musculus (Mouse) protein is Zinc finger protein ZIC 3 (Zic3).